A 523-amino-acid chain; its full sequence is GMP synthase [glutamine-hydrolyzing] (523 aa).

The Glutamine amidotransferase type-1 domain maps to 8–205 (KILILDFGSQ…VVNICGCETK (198 aa)). Catalysis depends on Cys85, which acts as the Nucleophile. Active-site residues include His179 and Glu181. Residues 206–398 (WTAENIIEDA…LGLPAEMINR (193 aa)) enclose the GMPS ATP-PPase domain. Residue 233-239 (SGGVDSS) participates in ATP binding.

In terms of assembly, homodimer.

It catalyses the reaction XMP + L-glutamine + ATP + H2O = GMP + L-glutamate + AMP + diphosphate + 2 H(+). Its pathway is purine metabolism; GMP biosynthesis; GMP from XMP (L-Gln route): step 1/1. Its function is as follows. Catalyzes the synthesis of GMP from XMP. The polypeptide is GMP synthase [glutamine-hydrolyzing] (Haemophilus influenzae (strain PittEE)).